Here is a 317-residue protein sequence, read N- to C-terminus: Glycerol-3-phosphate dehydrogenase [NAD(P)+] (317 aa).

NADPH contacts are provided by tryptophan 20, arginine 40, arginine 41, and lysine 88. Sn-glycerol 3-phosphate-binding residues include lysine 88 and glycine 116. Residue serine 120 participates in NADPH binding. Sn-glycerol 3-phosphate is bound by residues lysine 171, aspartate 224, serine 234, arginine 235, and asparagine 236. Residue lysine 171 is the Proton acceptor of the active site. Arginine 235 contacts NADPH. Position 261 (glutamate 261) interacts with NADPH.

This sequence belongs to the NAD-dependent glycerol-3-phosphate dehydrogenase family.

Its subcellular location is the cytoplasm. It catalyses the reaction sn-glycerol 3-phosphate + NAD(+) = dihydroxyacetone phosphate + NADH + H(+). It carries out the reaction sn-glycerol 3-phosphate + NADP(+) = dihydroxyacetone phosphate + NADPH + H(+). It functions in the pathway membrane lipid metabolism; glycerophospholipid metabolism. Functionally, catalyzes the reduction of the glycolytic intermediate dihydroxyacetone phosphate (DHAP) to sn-glycerol 3-phosphate (G3P), the key precursor for phospholipid synthesis. This chain is Glycerol-3-phosphate dehydrogenase [NAD(P)+], found in Synechocystis sp. (strain ATCC 27184 / PCC 6803 / Kazusa).